Reading from the N-terminus, the 183-residue chain is MKLIGITGMPGSGKSAITKLAEKYKITVVSMGDVVRHETSKQGLILNPENVGNTAVKLRELHGKEAIAIPCLNYVNEKYNCEDFVIIEGIRSIYEVNYLKKHAKLDIIAIHSSPKTRFDRLSGRNREDDSNDWNTFVERDERELNFSIGNVIALSDYMVVNEGNYNDFIHDLENTLKNIIKAD.

Gly8–Ser15 contributes to the ATP binding site.

Belongs to the UPF0200 family.

The chain is UPF0200 protein MmarC7_0527 from Methanococcus maripaludis (strain C7 / ATCC BAA-1331).